A 401-amino-acid polypeptide reads, in one-letter code: 8-amino-7-oxononanoate synthase (401 aa).

Arg-24 lines the substrate pocket. Residue 111 to 112 participates in pyridoxal 5'-phosphate binding; it reads GF. His-137 lines the substrate pocket. The pyridoxal 5'-phosphate site is built by Ser-183, His-211, and Thr-240. An N6-(pyridoxal phosphate)lysine modification is found at Lys-243. Thr-357 is a substrate binding site.

The protein belongs to the class-II pyridoxal-phosphate-dependent aminotransferase family. BioF subfamily. As to quaternary structure, homodimer. Pyridoxal 5'-phosphate is required as a cofactor.

The enzyme catalyses 6-carboxyhexanoyl-[ACP] + L-alanine + H(+) = (8S)-8-amino-7-oxononanoate + holo-[ACP] + CO2. Its pathway is cofactor biosynthesis; biotin biosynthesis. Its function is as follows. Catalyzes the decarboxylative condensation of pimeloyl-[acyl-carrier protein] and L-alanine to produce 8-amino-7-oxononanoate (AON), [acyl-carrier protein], and carbon dioxide. This chain is 8-amino-7-oxononanoate synthase, found in Xanthomonas oryzae pv. oryzae (strain MAFF 311018).